The following is a 642-amino-acid chain: Conserved oligomeric Golgi complex subunit 6 (642 aa).

The protein belongs to the COG6 family. As to quaternary structure, component of the conserved oligomeric Golgi complex which is composed of eight different subunits and is required for normal Golgi morphology and localization.

Its subcellular location is the golgi apparatus membrane. Required for normal Golgi function. The chain is Conserved oligomeric Golgi complex subunit 6 (cogc-6) from Caenorhabditis elegans.